Consider the following 123-residue polypeptide: MPTMKQLIRNTRQPIRNVTKSPALRGCPQRRGTCTRVYTITPKKPNSALRKVARVRLTSGFEITAYIPGIGHNLQEHSVVLVRGGRVKDLPGVRYHIVRGTLDAVGVKDRQQGRSKYGAKKPK.

It belongs to the universal ribosomal protein uS12 family. Part of the 30S ribosomal subunit.

It is found in the plastid. Its subcellular location is the chloroplast. In terms of biological role, with S4 and S5 plays an important role in translational accuracy. Located at the interface of the 30S and 50S subunits. This chain is Small ribosomal subunit protein uS12cz/uS12cy (rps12-A), found in Glycine max (Soybean).